A 326-amino-acid chain; its full sequence is Lipid droplet-associated hydrolase (326 aa).

Ser140 functions as the Nucleophile in the catalytic mechanism. Catalysis depends on charge relay system residues Asp272 and His301.

The protein belongs to the AB hydrolase superfamily. LDAH family. As to expression, expressed in liver, adrenal gland, prostate, spleen, kidney, brown and white adipose tissue, testis and to a lesser extent in brain (at protein level). Expressed in peritoneal macrophages and bone marrow-derived macrophages (at protein level). Highly expressed in macrophage and foam cell-rich areas in atherosclerotic lesions (at protein level). mRNA, but no protein, expressed in heart and muscle.

The protein resides in the lipid droplet. It is found in the endoplasmic reticulum. It carries out the reaction a cholesterol ester + H2O = cholesterol + a fatty acid + H(+). Functionally, probable serine lipid hydrolase associated with lipid droplets. Has low cholesterol esterase activity. Appears to lack triglyceride lipase activity. Involved in cholesterol and triglyceride homeostasis; stimulates cellular triglyceride accumulation and cellular cholesterol release. Acts antagonistically with PNPLA2/ATGL in regulation of cellular lipid stores. May regulate triglyceride accumulation indirectly through stimulation of PNPLA2/ATGL ubiquitination and proteasomal degradation. Promotes microtubule-dependent lipid droplet fusion. Highly expressed in macrophage-rich areas in atherosclerotic lesions, suggesting that it could promote cholesterol ester turnover in macrophages. Its function is as follows. Stimulates cellular triglyceride accumulation and lipid droplet fusion. Associates with lipid droplets but does not stimulate cellular triglyceride accumulation, lipid droplet fusion or ATGL proteasomal degradation. This Mus musculus (Mouse) protein is Lipid droplet-associated hydrolase.